A 194-amino-acid chain; its full sequence is Mitochondrial import inner membrane translocase subunit Tim22 (194 aa).

Intrachain disulfides connect cysteine 69-cysteine 141 and cysteine 160-cysteine 179. 3 helical membrane-spanning segments follow: residues 74–94 (ALACVGGFVLGGAFGVFTAGI), 123–143 (MSYAKNFAIVGAMFSCTECLI), and 170–190 (AGLKAGAIGCGGFAAFSAAID).

The protein belongs to the Tim17/Tim22/Tim23 family. As to quaternary structure, component of the TIM22 complex, whose core is composed of TIMM22, associated with peripheral protein FXC1/TIMM10B and the 70 kDa heterohexamer. In most cases, the 70 kDa complex is composed of TIMM9 and TIMM10 (TIMM10A or TIMM10B). A small fraction of the 70 kDa complex is composed of TIMM8 (TIMM8A/DDP1 or TIMM8B/DDP2) and TIMM13. The TIM22 complex also contains AGK and TIMM29. Interacts directly with TIMM9, TIMM10A and FXC1/TIMM10B. Interacts (when oxidized) with TIMM29; interaction is direct. Disulfide bonds promote efficient assembly of the TIM22 complex.

It is found in the mitochondrion inner membrane. Essential core component of the TIM22 complex, a complex that mediates the import and insertion of multi-pass transmembrane proteins into the mitochondrial inner membrane. In the TIM22 complex, it constitutes the voltage-activated and signal-gated channel. Forms a twin-pore translocase that uses the membrane potential as external driving force in 2 voltage-dependent steps. The polypeptide is Mitochondrial import inner membrane translocase subunit Tim22 (TIMM22) (Homo sapiens (Human)).